A 375-amino-acid chain; its full sequence is 2-isopropylmalate synthase (375 aa).

The Pyruvate carboxyltransferase domain maps to 1 to 124; it reads GRTSIDNLCR…FTNIKHNELY (124 aa). His-59, His-61, and Asn-95 together coordinate Mn(2+). The interval 250 to 375 is regulatory domain; the sequence is QLKYFSIHSG…SKIKNIKNKK (126 aa).

The protein belongs to the alpha-IPM synthase/homocitrate synthase family. LeuA type 1 subfamily. In terms of assembly, homodimer.

Its subcellular location is the cytoplasm. The enzyme catalyses 3-methyl-2-oxobutanoate + acetyl-CoA + H2O = (2S)-2-isopropylmalate + CoA + H(+). Its pathway is amino-acid biosynthesis; L-leucine biosynthesis; L-leucine from 3-methyl-2-oxobutanoate: step 1/4. Its function is as follows. Catalyzes the condensation of the acetyl group of acetyl-CoA with 3-methyl-2-oxobutanoate (2-ketoisovalerate) to form 3-carboxy-3-hydroxy-4-methylpentanoate (2-isopropylmalate). In Buchnera aphidicola subsp. Thelaxes suberi, this protein is 2-isopropylmalate synthase.